A 149-amino-acid chain; its full sequence is Large ribosomal subunit protein uL15 (149 aa).

2 stretches are compositionally biased toward basic residues: residues 1–13 (MPTR…KHRG) and 21–42 (RIGK…HHHR). Residues 1–44 (MPTRLTKTRKHRGNVSAGKGRIGKHRKHPGGRGKAGGQHHHRTN) form a disordered region.

This sequence belongs to the universal ribosomal protein uL15 family. As to quaternary structure, component of the large ribosomal subunit. Mature ribosomes consist of a small (40S) and a large (60S) subunit. The 40S subunit contains about 32 different proteins and 1 molecule of RNA (18S). The 60S subunit contains 45 different proteins and 3 molecules of RNA (25S, 5.8S and 5S).

The protein resides in the cytoplasm. Functionally, component of the ribosome, a large ribonucleoprotein complex responsible for the synthesis of proteins in the cell. The small ribosomal subunit (SSU) binds messenger RNAs (mRNAs) and translates the encoded message by selecting cognate aminoacyl-transfer RNA (tRNA) molecules. The large subunit (LSU) contains the ribosomal catalytic site termed the peptidyl transferase center (PTC), which catalyzes the formation of peptide bonds, thereby polymerizing the amino acids delivered by tRNAs into a polypeptide chain. The nascent polypeptides leave the ribosome through a tunnel in the LSU and interact with protein factors that function in enzymatic processing, targeting, and the membrane insertion of nascent chains at the exit of the ribosomal tunnel. This chain is Large ribosomal subunit protein uL15, found in Candida albicans (strain SC5314 / ATCC MYA-2876) (Yeast).